The following is a 244-amino-acid chain: CTD nuclear envelope phosphatase 1 (244 aa).

The helical transmembrane segment at L7–R29 threads the bilayer. In terms of domain architecture, FCP1 homology spans A57–L224.

It belongs to the dullard family. (Microbial infection) Interacts with Chandipura virus matrix protein. In terms of assembly, interacts with CNEP1R1; the complex dephosphorylates LPIN1 and LPIN2. In terms of tissue distribution, muscle specific with lower expression in other metabolic tissues.

The protein resides in the endoplasmic reticulum membrane. It localises to the nucleus membrane. The enzyme catalyses O-phospho-L-seryl-[protein] + H2O = L-seryl-[protein] + phosphate. It carries out the reaction O-phospho-L-threonyl-[protein] + H2O = L-threonyl-[protein] + phosphate. Serine/threonine protein phosphatase forming with CNEP1R1 an active phosphatase complex that dephosphorylates and may activate LPIN1 and LPIN2. LPIN1 and LPIN2 are phosphatidate phosphatases that catalyze the conversion of phosphatidic acid to diacylglycerol and control the metabolism of fatty acids at different levels. May indirectly modulate the lipid composition of nuclear and/or endoplasmic reticulum membranes and be required for proper nuclear membrane morphology and/or dynamics. May also indirectly regulate the production of lipid droplets and triacylglycerol. May antagonize BMP signaling. In Homo sapiens (Human), this protein is CTD nuclear envelope phosphatase 1 (CTDNEP1).